The chain runs to 75 residues: Small ribosomal subunit protein bS18 (75 aa).

It belongs to the bacterial ribosomal protein bS18 family. Part of the 30S ribosomal subunit. Forms a tight heterodimer with protein bS6.

In terms of biological role, binds as a heterodimer with protein bS6 to the central domain of the 16S rRNA, where it helps stabilize the platform of the 30S subunit. In Cellvibrio japonicus (strain Ueda107) (Pseudomonas fluorescens subsp. cellulosa), this protein is Small ribosomal subunit protein bS18.